The chain runs to 273 residues: Tryptophan synthase alpha chain (273 aa).

Residues Glu56 and Asp67 each act as proton acceptor in the active site.

This sequence belongs to the TrpA family. As to quaternary structure, tetramer of two alpha and two beta chains.

The catalysed reaction is (1S,2R)-1-C-(indol-3-yl)glycerol 3-phosphate + L-serine = D-glyceraldehyde 3-phosphate + L-tryptophan + H2O. It functions in the pathway amino-acid biosynthesis; L-tryptophan biosynthesis; L-tryptophan from chorismate: step 5/5. In terms of biological role, the alpha subunit is responsible for the aldol cleavage of indoleglycerol phosphate to indole and glyceraldehyde 3-phosphate. This chain is Tryptophan synthase alpha chain, found in Shewanella baltica (strain OS155 / ATCC BAA-1091).